The sequence spans 72 residues: Translation initiation factor IF-1 (72 aa).

Positions 1-72 (MAKEDSIRMQ…NKGRIVYRER (72 aa)) constitute an S1-like domain.

Belongs to the IF-1 family. In terms of assembly, component of the 30S ribosomal translation pre-initiation complex which assembles on the 30S ribosome in the order IF-2 and IF-3, IF-1 and N-formylmethionyl-tRNA(fMet); mRNA recruitment can occur at any time during PIC assembly.

The protein localises to the cytoplasm. In terms of biological role, one of the essential components for the initiation of protein synthesis. Stabilizes the binding of IF-2 and IF-3 on the 30S subunit to which N-formylmethionyl-tRNA(fMet) subsequently binds. Helps modulate mRNA selection, yielding the 30S pre-initiation complex (PIC). Upon addition of the 50S ribosomal subunit IF-1, IF-2 and IF-3 are released leaving the mature 70S translation initiation complex. The chain is Translation initiation factor IF-1 from Halorhodospira halophila (strain DSM 244 / SL1) (Ectothiorhodospira halophila (strain DSM 244 / SL1)).